The sequence spans 745 residues: Elongation factor G, mitochondrial (745 aa).

Residues 40–317 form the tr-type G domain; the sequence is ERIRNIGISA…AVLDYLPNPG (278 aa). GTP-binding positions include 49–56, 116–120, and 170–173; these read AHIDSGKT, DTPGH, and NKLD.

This sequence belongs to the TRAFAC class translation factor GTPase superfamily. Classic translation factor GTPase family. EF-G/EF-2 subfamily.

Its subcellular location is the mitochondrion. The protein operates within protein biosynthesis; polypeptide chain elongation. Mitochondrial GTPase that catalyzes the GTP-dependent ribosomal translocation step during translation elongation. During this step, the ribosome changes from the pre-translocational (PRE) to the post-translocational (POST) state as the newly formed A-site-bound peptidyl-tRNA and P-site-bound deacylated tRNA move to the P and E sites, respectively. Catalyzes the coordinated movement of the two tRNA molecules, the mRNA and conformational changes in the ribosome. Essential during development as it acts as a retrograde signal from mitochondria to the nucleus to slow down cell proliferation if mitochondrial energy output is low. This chain is Elongation factor G, mitochondrial, found in Drosophila sechellia (Fruit fly).